A 287-amino-acid polypeptide reads, in one-letter code: ATP synthase gamma chain (287 aa).

It belongs to the ATPase gamma chain family. In terms of assembly, F-type ATPases have 2 components, CF(1) - the catalytic core - and CF(0) - the membrane proton channel. CF(1) has five subunits: alpha(3), beta(3), gamma(1), delta(1), epsilon(1). CF(0) has three main subunits: a, b and c.

The protein resides in the cell inner membrane. In terms of biological role, produces ATP from ADP in the presence of a proton gradient across the membrane. The gamma chain is believed to be important in regulating ATPase activity and the flow of protons through the CF(0) complex. This Klebsiella pneumoniae (strain 342) protein is ATP synthase gamma chain.